The primary structure comprises 771 residues: Probable glycosyltransferase STELLO1 (771 aa).

Residues 1-23 are disordered; the sequence is MLVQDRAAPSPAKPPKSQIRELP. At 1 to 50 the chain is on the cytoplasmic side; that stretch reads MLVQDRAAPSPAKPPKSQIRELPTHQQIRRRFSEPKNLDFSTWFSENLSR. Residues 51 to 71 traverse the membrane as a helical segment; the sequence is IAVFSLLIVTIVAFFFLYNTT. Residues 72-771 lie on the Lumenal side of the membrane; that stretch reads DTASLLCFQS…EGDPLLMELV (700 aa). Residues Asn-242 and Asn-729 are each glycosylated (N-linked (GlcNAc...) asparagine).

This sequence belongs to the STELLO family. As to quaternary structure, homo- and heterodimer with STL2. Interacts with CESA1, CESA3, CESA4, CESA6, CESA7 and CESA8, but not with GOT1. In terms of tissue distribution, expressed in cells that are expanding or producing secondary cell walls.

The protein localises to the golgi apparatus membrane. Functionally, probable glycosyltransferase regulating the assembly and trafficking of cellulose synthase complexes. The protein is Probable glycosyltransferase STELLO1 of Arabidopsis thaliana (Mouse-ear cress).